A 430-amino-acid polypeptide reads, in one-letter code: Glutamate-1-semialdehyde 2,1-aminomutase (430 aa).

Lysine 266 bears the N6-(pyridoxal phosphate)lysine mark.

This sequence belongs to the class-III pyridoxal-phosphate-dependent aminotransferase family. HemL subfamily. As to quaternary structure, homodimer. Pyridoxal 5'-phosphate is required as a cofactor.

It localises to the cytoplasm. The catalysed reaction is (S)-4-amino-5-oxopentanoate = 5-aminolevulinate. It functions in the pathway porphyrin-containing compound metabolism; protoporphyrin-IX biosynthesis; 5-aminolevulinate from L-glutamyl-tRNA(Glu): step 2/2. The chain is Glutamate-1-semialdehyde 2,1-aminomutase from Acidithiobacillus ferrooxidans (strain ATCC 23270 / DSM 14882 / CIP 104768 / NCIMB 8455) (Ferrobacillus ferrooxidans (strain ATCC 23270)).